The following is a 208-amino-acid chain: Thiamine-phosphate synthase (208 aa).

4-amino-2-methyl-5-(diphosphooxymethyl)pyrimidine contacts are provided by residues 37–39 (QVR) and N70. 2 residues coordinate Mg(2+): D71 and D90. T109 is a binding site for 4-amino-2-methyl-5-(diphosphooxymethyl)pyrimidine. A 2-[(2R,5Z)-2-carboxy-4-methylthiazol-5(2H)-ylidene]ethyl phosphate-binding site is contributed by 135–137 (TTS). K138 is a 4-amino-2-methyl-5-(diphosphooxymethyl)pyrimidine binding site. 2-[(2R,5Z)-2-carboxy-4-methylthiazol-5(2H)-ylidene]ethyl phosphate is bound at residue A166.

It belongs to the thiamine-phosphate synthase family. The cofactor is Mg(2+).

The enzyme catalyses 2-[(2R,5Z)-2-carboxy-4-methylthiazol-5(2H)-ylidene]ethyl phosphate + 4-amino-2-methyl-5-(diphosphooxymethyl)pyrimidine + 2 H(+) = thiamine phosphate + CO2 + diphosphate. It carries out the reaction 2-(2-carboxy-4-methylthiazol-5-yl)ethyl phosphate + 4-amino-2-methyl-5-(diphosphooxymethyl)pyrimidine + 2 H(+) = thiamine phosphate + CO2 + diphosphate. It catalyses the reaction 4-methyl-5-(2-phosphooxyethyl)-thiazole + 4-amino-2-methyl-5-(diphosphooxymethyl)pyrimidine + H(+) = thiamine phosphate + diphosphate. Its pathway is cofactor biosynthesis; thiamine diphosphate biosynthesis; thiamine phosphate from 4-amino-2-methyl-5-diphosphomethylpyrimidine and 4-methyl-5-(2-phosphoethyl)-thiazole: step 1/1. Condenses 4-methyl-5-(beta-hydroxyethyl)thiazole monophosphate (THZ-P) and 2-methyl-4-amino-5-hydroxymethyl pyrimidine pyrophosphate (HMP-PP) to form thiamine monophosphate (TMP). This Salinispora tropica (strain ATCC BAA-916 / DSM 44818 / JCM 13857 / NBRC 105044 / CNB-440) protein is Thiamine-phosphate synthase.